Here is a 356-residue protein sequence, read N- to C-terminus: Galactosylgalactosylxylosylprotein 3-beta-glucuronosyltransferase sqv-8 (356 aa).

At M1–K9 the chain is on the cytoplasmic side. Residues W10–I30 traverse the membrane as a helical; Signal-anchor for type II membrane protein segment. Residues N31 to N356 lie on the Lumenal side of the membrane. 2 N-linked (GlcNAc...) asparagine glycosylation sites follow: N93 and N173. D208 contributes to the Mn(2+) binding site. N246 and N272 each carry an N-linked (GlcNAc...) asparagine glycan. E294 (proton acceptor) is an active-site residue.

This sequence belongs to the glycosyltransferase 43 family.

It localises to the membrane. The enzyme catalyses 3-O-(beta-D-galactosyl-(1-&gt;3)-beta-D-galactosyl-(1-&gt;4)-beta-D-xylosyl)-L-seryl-[protein] + UDP-alpha-D-glucuronate = 3-O-(beta-D-GlcA-(1-&gt;3)-beta-D-Gal-(1-&gt;3)-beta-D-Gal-(1-&gt;4)-beta-D-Xyl)-L-seryl-[protein] + UDP + H(+). In terms of biological role, glycosyltransferase required for the biosynthesis of the tetrasaccharide (GlcA-Gal-Gal-Xyl-)Ser core linker of heparan sulfate and chondroitin sulfate. May be involved in the biosynthesis of the HNK-1 carbohydrate epitope on glycoproteins. Required for embryonic development. Involved in the elongation of the pharyngeal isthmus during the later stages of embryonic development. Involved in vulval epithelium invagination. In Caenorhabditis elegans, this protein is Galactosylgalactosylxylosylprotein 3-beta-glucuronosyltransferase sqv-8 (sqv-8).